Reading from the N-terminus, the 221-residue chain is N-acetyltransferase 8F1 (221 aa).

The chain crosses the membrane as a helical span at residues 53 to 73 (LVLVSGSWLLAVVCIFFLLLL). Positions 69-219 (FLLLLLRFLA…RTIQLKYPFP (151 aa)) constitute an N-acetyltransferase domain.

Belongs to the camello family.

It is found in the membrane. Functionally, may play a role in regulation of gastrulation. The sequence is that of N-acetyltransferase 8F1 from Rattus norvegicus (Rat).